A 292-amino-acid polypeptide reads, in one-letter code: Ribosomal RNA small subunit methyltransferase A (292 aa).

Asn-28, Leu-30, Gly-55, Glu-76, Asp-101, and Asn-126 together coordinate S-adenosyl-L-methionine.

The protein belongs to the class I-like SAM-binding methyltransferase superfamily. rRNA adenine N(6)-methyltransferase family. RsmA subfamily.

The protein resides in the cytoplasm. It carries out the reaction adenosine(1518)/adenosine(1519) in 16S rRNA + 4 S-adenosyl-L-methionine = N(6)-dimethyladenosine(1518)/N(6)-dimethyladenosine(1519) in 16S rRNA + 4 S-adenosyl-L-homocysteine + 4 H(+). In terms of biological role, specifically dimethylates two adjacent adenosines (A1518 and A1519) in the loop of a conserved hairpin near the 3'-end of 16S rRNA in the 30S particle. May play a critical role in biogenesis of 30S subunits. This chain is Ribosomal RNA small subunit methyltransferase A, found in Bacillus anthracis.